We begin with the raw amino-acid sequence, 135 residues long: UPF0299 membrane protein ECA2828 (135 aa).

A run of 4 helical transmembrane segments spans residues 5-25 (FIVCWQYLRAFALIYLCLLAG), 30-50 (ALLPFTIPGSIIGMLVLFTLL), 63-83 (GCYLLIRHMALLFVPIGVGVM), and 93-113 (FGPIVVSCLISTFIVMLVVGF).

This sequence belongs to the UPF0299 family.

The protein resides in the cell inner membrane. The protein is UPF0299 membrane protein ECA2828 of Pectobacterium atrosepticum (strain SCRI 1043 / ATCC BAA-672) (Erwinia carotovora subsp. atroseptica).